The primary structure comprises 97 residues: Small ribosomal subunit protein bS20 (97 aa).

This sequence belongs to the bacterial ribosomal protein bS20 family.

Functionally, binds directly to 16S ribosomal RNA. In Prochlorococcus marinus (strain MIT 9312), this protein is Small ribosomal subunit protein bS20.